The primary structure comprises 168 residues: Cell division inhibitor SulA (168 aa).

The segment at 105–111 (ALQTGNY) is ftsZ binding.

The protein belongs to the SulA family. Interacts with FtsZ. Is rapidly cleaved and degraded by the Lon protease once DNA damage is repaired.

Its function is as follows. Component of the SOS system and an inhibitor of cell division. Accumulation of SulA causes rapid cessation of cell division and the appearance of long, non-septate filaments. In the presence of GTP, binds a polymerization-competent form of FtsZ in a 1:1 ratio, thus inhibiting FtsZ polymerization and therefore preventing it from participating in the assembly of the Z ring. This mechanism prevents the premature segregation of damaged DNA to daughter cells during cell division. This chain is Cell division inhibitor SulA, found in Erwinia pyrifoliae (strain DSM 12163 / CIP 106111 / Ep16/96).